The sequence spans 147 residues: Hemoglobin subunit epsilon (147 aa).

The Globin domain occupies His3–His147. Phosphoserine occurs at positions 14 and 51. Heme b-binding residues include His64 and His93.

Belongs to the globin family. As to quaternary structure, heterotetramer of two alpha chains and two epsilon chains in early embryonic hemoglobin Gower-2; two zeta chains and two epsilon chains in early embryonic hemoglobin Gower-1. As to expression, red blood cells.

Its function is as follows. The epsilon chain is a beta-type chain of early mammalian embryonic hemoglobin. This Callithrix jacchus (White-tufted-ear marmoset) protein is Hemoglobin subunit epsilon (HBE1).